The following is a 390-amino-acid chain: ATP-sensitive inward rectifier potassium channel 11 (390 aa).

At 1 to 65 (MLSRKGIIPE…LQDVFTTLVD (65 aa)) the chain is on the cytoplasmic side. Positions 48 and 50 each coordinate ATP. The helical transmembrane segment at 66-92 (LKWPHTLLIFTMSFLCSWLLFAMVWWL) threads the bilayer. Residues 93-116 (IAFAHGDLAPGEGTTVPCVTSIHS) are Extracellular-facing. Cysteine 110 and cysteine 142 form a disulfide bridge. Positions 117–133 (FSSAFLFSIEVQVTIGF) form an intramembrane region, discontinuously helical; Pore-forming. K(+) contacts are provided by threonine 130 and phenylalanine 133. The Selectivity filter signature appears at 130–135 (TIGFGG). The Extracellular portion of the chain corresponds to 134 to 142 (GGRMVTEEC). A helical membrane pass occupies residues 143 to 171 (PLAILILIVQNIVGLMINAIMLGCIFMKT). Residues 172-390 (SQAHRRAETL…RFSISPDSLS (219 aa)) lie on the Cytoplasmic side of the membrane. Arginine 176 serves as a coordination point for a 1,2-diacyl-sn-glycero-3-phospho-(1D-myo-inositol-4,5-bisphosphate). Residue tyrosine 330 coordinates ATP. The residue at position 341 (threonine 341) is a Phosphothreonine; by MAPK1. Residue serine 385 is modified to Phosphoserine; by MAPK1.

This sequence belongs to the inward rectifier-type potassium channel (TC 1.A.2.1) family. KCNJ11 subfamily. As to quaternary structure, homotetramer; the homotetramer binds four ATP molecules (one ATP per subunit). Forms an heterooctamer with ABCC8/SUR1; one KCNJ11 homotetramer interacts with four ABCC8/SUR1 molecules. Interacts with ABCC9/SUR2. In terms of processing, phosphorylation by MAPK1 results in changes in channel gating that destabilize the closed states and reduce the ATP sensitivity.

It is found in the membrane. The catalysed reaction is K(+)(in) = K(+)(out). With respect to regulation, KATP channels are regulated by cytoplasmic ATP/ADP ratios; ATP inhibits the channel by closing the pore, while ADP activates the channel. Activated by phosphatidylinositol 4,5-biphosphate (PtdIns(4,5)P2). Inward rectifier potassium channel that forms the pore of ATP-sensitive potassium channels (KATP), regulating potassium permeability as a function of cytoplasmic ATP and ADP concentrations in many different cells. Inward rectifier potassium channels are characterized by a greater tendency to allow potassium to flow into the cell rather than out of it. Their voltage dependence is regulated by the concentration of extracellular potassium; as external potassium is raised, the voltage range of the channel opening shifts to more positive voltages. The inward rectification is mainly due to the blockage of outward current by internal magnesium. Can be blocked by extracellular barium. In pancreatic cells, it forms KATP channels with ABCC8/SUR1. Can form cardiac and smooth muscle-type KATP channels with ABCC9. In Cavia porcellus (Guinea pig), this protein is ATP-sensitive inward rectifier potassium channel 11 (KCNJ11).